The following is a 922-amino-acid chain: Up-regulator of cell proliferation (922 aa).

Residues Met1–Glu20 form a disordered region. Phosphoserine is present on Ser3. One can recognise a VLIG-type G domain in the interval Arg680 to Arg920.

This sequence belongs to the TRAFAC class dynamin-like GTPase superfamily. Very large inducible GTPase (VLIG) family.

It localises to the cytoplasm. It is found in the nucleus. Functionally, may be involved in cell cycle progression through the regulation of cyclin D1 expression. The polypeptide is Up-regulator of cell proliferation (URGCP) (Bos taurus (Bovine)).